A 335-amino-acid polypeptide reads, in one-letter code: Glyceraldehyde-3-phosphate dehydrogenase, cytosolic (335 aa).

NAD(+) contacts are provided by residues 13 to 14, D35, and R80; that span reads RI. Residues 151 to 153, T182, 211 to 212, and R234 contribute to the D-glyceraldehyde 3-phosphate site; these read SCT and TG. The active-site Nucleophile is the C152. N316 lines the NAD(+) pocket.

This sequence belongs to the glyceraldehyde-3-phosphate dehydrogenase family. As to quaternary structure, homotetramer.

The protein localises to the cytoplasm. It catalyses the reaction D-glyceraldehyde 3-phosphate + phosphate + NAD(+) = (2R)-3-phospho-glyceroyl phosphate + NADH + H(+). It participates in carbohydrate degradation; glycolysis; pyruvate from D-glyceraldehyde 3-phosphate: step 1/5. The chain is Glyceraldehyde-3-phosphate dehydrogenase, cytosolic (GAPC) from Chondrus crispus (Carrageen Irish moss).